Consider the following 129-residue polypeptide: MTIAMLLTLHLICVALSVSLFVARYWWRYCGHALAAARWTRIVPPVIDTLLLLSGIGLIVKTHILPFTESGSWLTEKLFGVIIYIVLGFIALDYRQARSQQARFIAFPLALVVLYIIIKLATTKIPLLG.

Residues 1-2 are Periplasmic-facing; the sequence is MT. The chain crosses the membrane as a helical span at residues 3–23; the sequence is IAMLLTLHLICVALSVSLFVA. Residues 24 to 41 are Cytoplasmic-facing; it reads RYWWRYCGHALAAARWTR. Residues 42–62 form a helical membrane-spanning segment; it reads IVPPVIDTLLLLSGIGLIVKT. Residues 63–71 lie on the Periplasmic side of the membrane; sequence HILPFTESG. The chain crosses the membrane as a helical span at residues 72–92; that stretch reads SWLTEKLFGVIIYIVLGFIAL. Topologically, residues 93–104 are cytoplasmic; that stretch reads DYRQARSQQARF. Residues 105–125 traverse the membrane as a helical segment; it reads IAFPLALVVLYIIIKLATTKI. Over 126–129 the chain is Periplasmic; that stretch reads PLLG.

This sequence belongs to the SirB2 family.

It localises to the cell inner membrane. Functionally, required for maximal expression of sirC, not required to invade host cells. The polypeptide is Protein SirB2 (sirB2) (Salmonella typhi).